Reading from the N-terminus, the 424-residue chain is Tyrosine--tRNA ligase (424 aa).

Tyr37 is a binding site for L-tyrosine. Residues 42 to 51 (PTADSLHLGH) carry the 'HIGH' region motif. Position 144 is an N6-acetyllysine (Lys144). L-tyrosine contacts are provided by Tyr175 and Gln179. Positions 235–239 (KFGKT) match the 'KMSKS' region motif. Lys238 provides a ligand contact to ATP. The 58-residue stretch at 357-414 (ADLMQALVDSELQPSRGQARKTIASNAITINGEKQSDPEYFFKEEDRLFGRFTLLRRG) folds into the S4 RNA-binding domain.

Belongs to the class-I aminoacyl-tRNA synthetase family. TyrS type 1 subfamily. Homodimer.

It localises to the cytoplasm. The enzyme catalyses tRNA(Tyr) + L-tyrosine + ATP = L-tyrosyl-tRNA(Tyr) + AMP + diphosphate + H(+). Catalyzes the attachment of tyrosine to tRNA(Tyr) in a two-step reaction: tyrosine is first activated by ATP to form Tyr-AMP and then transferred to the acceptor end of tRNA(Tyr). This chain is Tyrosine--tRNA ligase, found in Shigella flexneri serotype 5b (strain 8401).